An 802-amino-acid polypeptide reads, in one-letter code: DEAD-box ATP-dependent RNA helicase 28 (802 aa).

A disordered region spans residues 1-179 (MDADFRFDPD…TDKKSGVVDP (179 aa)). Acidic residues-rich tracts occupy residues 76 to 131 (GDSE…EELE) and 138 to 169 (KSDE…EEEE). Coiled coils occupy residues 90 to 122 (DSEE…GVEV) and 149 to 174 (QDGE…DKKS). The Q motif motif lies at 194 to 222 (NSFLELNLSRPLLRACEALGYQKPTPIQA). The Helicase ATP-binding domain occupies 225-399 (IPLALTGRDI…TLSLNKPVRL (175 aa)). 238-245 (AITGSGKT) serves as a coordination point for ATP. The short motif at 347 to 350 (DEAD) is the DEAD box element. The Helicase C-terminal domain maps to 429-573 (VLLALCLKTF…SRIVAEKPVA (145 aa)). Residues 572-616 (VAECAKLIEELEDQISTIIQEEREERILRKAEMEATKAENMIAHK) adopt a coiled-coil conformation. The segment at 639–802 (KAAKESTSQG…KSKSRYNRRK (164 aa)) is disordered. Residues 644 to 659 (STSQGKSNSGVISAQQ) are compositionally biased toward polar residues. Over residues 666-684 (KEKKRREREKNLPRKKRRR) the composition is skewed to basic residues. Positions 671-712 (REREKNLPRKKRRRLEAEREMLEDESEDEEEAKESKGGKKEK) form a coiled coil. The span at 691-702 (MLEDESEDEEEA) shows a compositional bias: acidic residues. Positions 776 to 802 (RSLKKNNVMRKKSKNSFKSKSRYNRRK) are enriched in basic residues.

Belongs to the DEAD box helicase family. DDX27/DRS1 subfamily.

The enzyme catalyses ATP + H2O = ADP + phosphate + H(+). This is DEAD-box ATP-dependent RNA helicase 28 from Oryza sativa subsp. japonica (Rice).